The sequence spans 216 residues: Pyrophosphatase PpaX (216 aa).

The active-site Nucleophile is Asp-9.

It belongs to the HAD-like hydrolase superfamily. PpaX family. Mg(2+) is required as a cofactor.

It carries out the reaction diphosphate + H2O = 2 phosphate + H(+). Its function is as follows. Hydrolyzes pyrophosphate formed during P-Ser-HPr dephosphorylation by HPrK/P. Might play a role in controlling the intracellular pyrophosphate pool. This chain is Pyrophosphatase PpaX, found in Bacillus anthracis (strain A0248).